Here is a 198-residue protein sequence, read N- to C-terminus: Recombination protein RecR (198 aa).

The C4-type zinc finger occupies 57-72 (CSVCGHITDTDPCYIC). The 96-residue stretch at 80-175 (SMICVVEETK…KVTRLAHGLP (96 aa)) folds into the Toprim domain.

The protein belongs to the RecR family.

May play a role in DNA repair. It seems to be involved in an RecBC-independent recombinational process of DNA repair. It may act with RecF and RecO. This Macrococcus caseolyticus (strain JCSC5402) (Macrococcoides caseolyticum) protein is Recombination protein RecR.